Reading from the N-terminus, the 166-residue chain is Probable protein tyrosine phosphatase type IVA A (166 aa).

Positions 10–164 (NPASLVESST…YKSKKKSSCR (155 aa)) constitute a Tyrosine-protein phosphatase domain. Cysteine 52 and cysteine 107 are oxidised to a cystine. The active-site Proton donor is the aspartate 75. Cysteine 107 acts as the Phosphocysteine intermediate in catalysis. 108–113 (VAGLGR) provides a ligand contact to phosphate. Position 113 (arginine 113) interacts with substrate. Cysteine 163 is subject to Cysteine methyl ester. Cysteine 163 carries the S-farnesyl cysteine lipid modification. A propeptide spans 164 to 166 (RIM) (removed in mature form).

Belongs to the protein-tyrosine phosphatase family.

It localises to the membrane. It catalyses the reaction O-phospho-L-tyrosyl-[protein] + H2O = L-tyrosyl-[protein] + phosphate. This chain is Probable protein tyrosine phosphatase type IVA A, found in Dictyostelium discoideum (Social amoeba).